The primary structure comprises 336 residues: Phospho-N-acetylmuramoyl-pentapeptide-transferase (336 aa).

Transmembrane regions (helical) follow at residues 3–23, 53–73, 78–98, 118–138, 143–163, 174–194, 200–220, 226–246, 251–271, and 316–336; these read LTLI…PYFI, GGTV…LFSI, SLAL…IGFL, LALQ…PSGI, VFGY…FWVV, GIDG…GVIA, FDVL…FCFN, VFMG…ISIA, WTLL…MLQV, and AFLW…LYVF.

Belongs to the glycosyltransferase 4 family. MraY subfamily. Mg(2+) is required as a cofactor.

Its subcellular location is the cell membrane. It catalyses the reaction UDP-N-acetyl-alpha-D-muramoyl-L-alanyl-gamma-D-glutamyl-L-lysyl-D-alanyl-D-alanine + di-trans,octa-cis-undecaprenyl phosphate = Mur2Ac(oyl-L-Ala-gamma-D-Glu-L-Lys-D-Ala-D-Ala)-di-trans,octa-cis-undecaprenyl diphosphate + UMP. It functions in the pathway cell wall biogenesis; peptidoglycan biosynthesis. Catalyzes the initial step of the lipid cycle reactions in the biosynthesis of the cell wall peptidoglycan: transfers peptidoglycan precursor phospho-MurNAc-pentapeptide from UDP-MurNAc-pentapeptide onto the lipid carrier undecaprenyl phosphate, yielding undecaprenyl-pyrophosphoryl-MurNAc-pentapeptide, known as lipid I. This chain is Phospho-N-acetylmuramoyl-pentapeptide-transferase, found in Streptococcus pyogenes serotype M49 (strain NZ131).